A 338-amino-acid polypeptide reads, in one-letter code: MTALSSENCSFQYQLRQTNQPLDVNYLLFLIILGKILLNILTLGMRRKNTCQNFMEYFCISLAFVDLLLLVNISIILYFRDFVLLSIRFTKYHICLFTQIISFTYGFLHYPVFLTACIDYCLNFSKTTKLSFKCQKLFYFFTVILIWISVLAYVLGDPAIYQSLKAQNAYSRHCPFYVSIQSYWLSFFMVMILFVAFITCWEEVTTLVQAIRITSYMNETILYFPFSSHSSYTVRSKKIFLSKLIVCFLSTWLPFVLLQVIIVLLKVQIPAYIEMNIPWLYFVNSFLIATVYWFNCHKLNLKDIGLPLDPFVNWKCCFIPLTIPNLEQIEKPISIMIC.

The Extracellular segment spans residues 1 to 23; the sequence is MTALSSENCSFQYQLRQTNQPLD. Residue N8 is glycosylated (N-linked (GlcNAc...) asparagine). A helical membrane pass occupies residues 24–44; the sequence is VNYLLFLIILGKILLNILTLG. Topologically, residues 45-58 are cytoplasmic; sequence MRRKNTCQNFMEYF. Residues 59-79 traverse the membrane as a helical segment; the sequence is CISLAFVDLLLLVNISIILYF. Residues 80-93 are Extracellular-facing; that stretch reads RDFVLLSIRFTKYH. Residues 94-114 form a helical membrane-spanning segment; that stretch reads ICLFTQIISFTYGFLHYPVFL. At 115–136 the chain is on the cytoplasmic side; that stretch reads TACIDYCLNFSKTTKLSFKCQK. Residues 137–157 form a helical membrane-spanning segment; the sequence is LFYFFTVILIWISVLAYVLGD. The Extracellular segment spans residues 158–177; sequence PAIYQSLKAQNAYSRHCPFY. The chain crosses the membrane as a helical span at residues 178-198; it reads VSIQSYWLSFFMVMILFVAFI. At 199-244 the chain is on the cytoplasmic side; the sequence is TCWEEVTTLVQAIRITSYMNETILYFPFSSHSSYTVRSKKIFLSKL. A helical transmembrane segment spans residues 245–265; sequence IVCFLSTWLPFVLLQVIIVLL. At 266–268 the chain is on the extracellular side; sequence KVQ. A helical membrane pass occupies residues 269 to 289; sequence IPAYIEMNIPWLYFVNSFLIA. Residues 290–338 are Cytoplasmic-facing; that stretch reads TVYWFNCHKLNLKDIGLPLDPFVNWKCCFIPLTIPNLEQIEKPISIMIC.

The protein belongs to the G-protein coupled receptor 1 family.

It localises to the cell membrane. In terms of biological role, orphan receptor. The protein is Probable G-protein coupled receptor 160 (GPR160) of Homo sapiens (Human).